Consider the following 121-residue polypeptide: Ribosome-binding factor A (121 aa).

Belongs to the RbfA family. As to quaternary structure, monomer. Binds 30S ribosomal subunits, but not 50S ribosomal subunits or 70S ribosomes.

It is found in the cytoplasm. One of several proteins that assist in the late maturation steps of the functional core of the 30S ribosomal subunit. Associates with free 30S ribosomal subunits (but not with 30S subunits that are part of 70S ribosomes or polysomes). Required for efficient processing of 16S rRNA. May interact with the 5'-terminal helix region of 16S rRNA. In Oenococcus oeni (strain ATCC BAA-331 / PSU-1), this protein is Ribosome-binding factor A.